A 330-amino-acid chain; its full sequence is Dimethyladenosine transferase 1, mitochondrial (330 aa).

A mitochondrion-targeting transit peptide spans 1 to 84 (MAQPSARVLQ…RSILRRHPQR (84 aa)). S-adenosyl-L-methionine is bound by residues 38-41 (QNFL), Asn-39, Leu-41, Gly-67, Glu-89, Asp-118, and Asn-140.

Belongs to the class I-like SAM-binding methyltransferase superfamily. rRNA adenine N(6)-methyltransferase family. KsgA subfamily.

It localises to the mitochondrion. In terms of biological role, probable S-adenosyl-L-methionine-dependent methyltransferase which specifically dimethylates mitochondrial 12S rRNA at the conserved stem loop. In contrast to mtTFB2, it does not have a critical role in either transcription or regulation of the copy number of mitochondrial DNA. The sequence is that of Dimethyladenosine transferase 1, mitochondrial (mtTFB1) from Drosophila melanogaster (Fruit fly).